The following is a 369-amino-acid chain: Glycine oxidase (369 aa).

FAD is bound by residues 14 to 15 (II), 34 to 35 (ES), 42 to 43 (AT), 47 to 49 (AGM), and Val-174. Positions 302 and 329 each coordinate substrate. 327-333 (HFRNGIL) lines the FAD pocket.

This sequence belongs to the DAO family. ThiO subfamily. In terms of assembly, homotetramer. It depends on FAD as a cofactor.

It carries out the reaction glycine + O2 + H2O = glyoxylate + H2O2 + NH4(+). It catalyses the reaction glyphosate + O2 + H2O = aminomethylphosphonate + glyoxylate + H2O2 + H(+). The catalysed reaction is N-ethylglycine + O2 + H2O = ethylamine + glyoxylate + H2O2. The enzyme catalyses sarcosine + O2 + H2O = methylamine + glyoxylate + H2O2. It carries out the reaction D-alanine + O2 + H2O = pyruvate + H2O2 + NH4(+). It functions in the pathway cofactor biosynthesis; thiamine diphosphate biosynthesis. Its function is as follows. Catalyzes the FAD-dependent oxidative deamination of glycine, leading to glyoxylate, ammonia and hydrogen peroxide. Is also able to act on various amines and D-amino acids to yield the corresponding alpha-keto acids, ammonia/amine, and hydrogen peroxide. Can also oxidize the herbicide glyphosate (N-phosphonomethylglycine), and thus may be involved in the degradation pathway that allows B.licheniformis J33-8 to grow with glyphosate as the sole source of carbon. Is essential for thiamine biosynthesis since the oxidation of glycine catalyzed by ThiO generates the glycine imine intermediate (dehydroglycine) required for the biosynthesis of the thiazole ring of thiamine pyrophosphate. The chain is Glycine oxidase from Bacillus licheniformis.